Here is a 151-residue protein sequence, read N- to C-terminus: UPF0756 membrane protein Moth_0120 (151 aa).

4 helical membrane passes run 6–26 (VILILLMLLGILGRSNVIAAA), 52–72 (AGLIFLVVSVLVPFASGRVAP), 75–95 (MLQSFVSLPGLIAIASGIIAT), and 111–131 (MMIGMVIGSIIGVAFFGGIPV).

The protein belongs to the UPF0756 family.

It is found in the cell membrane. This chain is UPF0756 membrane protein Moth_0120, found in Moorella thermoacetica (strain ATCC 39073 / JCM 9320).